The primary structure comprises 321 residues: Olfactory receptor 14J1 (321 aa).

At 1–23 the chain is on the extracellular side; the sequence is MVNLTSMSGFLLMGFSDERKLQI. The N-linked (GlcNAc...) asparagine glycan is linked to asparagine 3. A helical transmembrane segment spans residues 24–44; that stretch reads LHALVFLVTYLLALTGNLLII. At 45 to 52 the chain is on the cytoplasmic side; that stretch reads TIITVDRR. Residues 53–73 form a helical membrane-spanning segment; that stretch reads LHSPMYYFLKHLSLLDLCFIS. Residues 74-97 are Extracellular-facing; sequence VTVPQSIANSLMGNGYISLVQCIL. Cysteine 95 and cysteine 187 form a disulfide bridge. A helical transmembrane segment spans residues 98-118; it reads QVFFFIALASSEVAILTVMSY. Residues 119–137 are Cytoplasmic-facing; sequence DRYAAICQPLHYETIMDPR. Residues 138–158 form a helical membrane-spanning segment; the sequence is ACRHAVIAVWIAGGLSGLMHA. Residues 159–194 lie on the Extracellular side of the membrane; the sequence is AINFSIPLCGKRVIHQFFCDVPQMLKLACSYEFINE. The chain crosses the membrane as a helical span at residues 195-215; it reads IALAAFTTSAAFICLISIVLS. The Cytoplasmic segment spans residues 216 to 235; the sequence is YIRIFSTVLRIPSAEGRTKV. Residues 236-256 traverse the membrane as a helical segment; the sequence is FSTCLPHLFVATFFLSAAGFE. Over 257 to 269 the chain is Extracellular; that stretch reads FLRLPSDSSSTVD. A helical transmembrane segment spans residues 270–290; sequence LVFSVFYTVIPPTLNPVIYSL. At 291 to 321 the chain is on the cytoplasmic side; sequence RNDSMKAALRKMLSKEELPQRKMCLKAMFKL.

The protein belongs to the G-protein coupled receptor 1 family.

Its subcellular location is the cell membrane. Its function is as follows. Odorant receptor. This chain is Olfactory receptor 14J1 (OR14J1), found in Homo sapiens (Human).